The primary structure comprises 856 residues: Structure-specific endonuclease subunit SLX4 (856 aa).

Residues 1 to 19 (MDNAAIASQSNTPPSNGRS) show a composition bias toward polar residues. 9 disordered regions span residues 1–24 (MDNAAIASQSNTPPSNGRSSARFV), 38–65 (VIEPSSPFSPPSPSTLLTSLSKSPSHKI), 88–121 (VDSPKRQDKSITGSKAKPASTMRHGQRTASHKMA), 139–202 (KTRK…DNEL), 296–326 (GIQTPTESRPATNDSQSISSKQQRVKVKKPQ), 362–392 (KKMGVTKRTSGTERANAARGKSDTLKNGNGP), 621–640 (SKSSKLEPKPNQRNHKSQGD), 668–689 (RLAKTSVKSQEPKSFSLSNEGP), and 715–742 (DSVGEALPLSPSHSSNGNGTLHHPQDCD). Positions 51-60 (STLLTSLSKS) are enriched in low complexity. Residues 139–152 (KTRKKKAATAKRTR) are compositionally biased toward basic residues. Residues 296–309 (GIQTPTESRPATND) are compositionally biased toward polar residues. Over residues 673–686 (SVKSQEPKSFSLSN) the composition is skewed to polar residues.

This sequence belongs to the SLX4 family. In terms of assembly, forms a heterodimer with SLX1. Phosphorylated in response to DNA damage.

The protein resides in the nucleus. Functionally, regulatory subunit of the SLX1-SLX4 structure-specific endonuclease that resolves DNA secondary structures generated during DNA repair and recombination. Has endonuclease activity towards branched DNA substrates, introducing single-strand cuts in duplex DNA close to junctions with ss-DNA. This is Structure-specific endonuclease subunit SLX4 from Blastomyces gilchristii (strain SLH14081) (Blastomyces dermatitidis).